Reading from the N-terminus, the 198-residue chain is MADTASKYAVKLRPNFDNPKWVNRHKFMFNFLDINGDGKITLDEIVSKASDDICAKLGATPEQTKRHQDAVEAFFKKIGMDYGKEVEFPAFVDGWKELANYDLKLWSQNKKSLIRDWGEAVFDIFDKDGSGSISLDEWKAYGRISGICSSDEDAEKTFKHCDLDNSGKLDVDEMTRQHLGFWYTLDPNADGLYGNFVP.

Positions 1-9 (MADTASKYA) are excised as a propeptide. EF-hand domains follow at residues 20–55 (KWVN…DICA), 60–95 (TPEQ…VDGW), 119–148 (EAVF…SGIC), and 149–184 (SSDE…FWYT). Aspartate 33, asparagine 35, aspartate 37, lysine 39, and glutamate 44 together coordinate Ca(2+). The Ca(2+) site is built by aspartate 126, aspartate 128, serine 130, serine 132, glutamate 137, aspartate 162, aspartate 164, serine 166, lysine 168, and glutamate 173.

This sequence belongs to the aequorin family.

In terms of biological role, ca(2+)-dependent bioluminescence photoprotein. Displays an emission peak at 470 nm (blue light). Trace amounts of calcium ion trigger the intramolecular oxidation of the chromophore, coelenterazine into coelenteramide and CO(2) with the concomitant emission of light. In Clytia gregaria (Gregarious jellyfish), this protein is Clytin.